The chain runs to 160 residues: SKP1-like protein 1A (160 aa).

An interaction with the F-box domain of F-box proteins region spans residues 102–160 (ILAANYLNIKNLLDLTCQTVADMIKGKTPEEIRTTFNIKNDFTPEEEEEVRRENQWAFE).

Belongs to the SKP1 family. Part of a SCF E3 ubiquitin ligase complex composed of SKP1, CUL1, RBX1 (RBX1A or RBX1B) and F-box proteins. Interacts with SKIP1, SKIP2, SKIP3, SKIP4, SKIP6, FIB1/SKIP7, SKIP8, PP2A11/SKIP10, SKIP11, PP2B11/SKIP12, PP2A14/SKIP13, SKIP14, SKIP15, SKIP16, SKIP19/FBL20, SKIP20, PP2B1/SKIP21, SKIP22, SKIP23, SKIP24, SKIP25, TULP10/SKIP26, SKIP27, SKIP28/MEE11, AFR/SKIP29, SKIP30, SKIP31, SKIP32/FBP7, SKIP33, SKIP35, ADO1/ZTL, ADO2/LKP2, ADO3/FKF1, AFR, COI1, DOR, EBF1, EBF2, EID1, ORE9, PP2A13/SKIP9, TIR1, UFO, SKP2A, CPR1/CPR30, FBL17, NUP58, At1g55000, At1g67340, At1g78100, At3g04660, At3g61590, At4g38940 and At5g49610. The SKP1A subunit of the SCF E3 ubiquitin ligase complex can interact directly with KIN10, KIN11 and the proteasome subunit PAD1. This interaction can be disrupted by PRL1. In case of polerovirus infection, part of a SCF P0 complex composed of the viral silencing suppressor P0, SKP1 and CUL1. Interacts with turnip yellows virus P0. Interacts with VBF and Agrobacterium virF. Binds to KIB1. As to expression, accumulates only in meristematic cells. Expressed in inflorescence, shoot and root apical meristems, as well as in developing organs such as gametocytes and seeds. Also detected in cortical layer and epidermis of roots, leaves, pith and vascular bundle of young stem, young floral buds and organ primordia, pollen and through the valve of siliques. Not detectable in mature root tissues.

The protein resides in the nucleus. Its subcellular location is the cytoplasm. The protein localises to the cytoskeleton. It localises to the spindle. It is found in the phragmoplast. Its pathway is protein modification; protein ubiquitination. Involved in ubiquitination and subsequent proteasomal degradation of target proteins. Together with CUL1, RBX1 and a F-box protein, it forms a SCF E3 ubiquitin ligase complex. The functional specificity of this complex depends on the type of F-box protein. In the SCF complex, it serves as an adapter that links the F-box protein to CUL1. SCF(UFO) is required for vegetative and floral organ development as well as for male gametogenesis. SCF(TIR1) is involved in auxin signaling pathway. SCF(COI1) regulates responses to jasmonates. SCF(EID1) and SCF(AFR) are implicated in phytochrome A light signaling. SCF(ADO1), SCF(ADO2), SCF(ADO3) are related to the circadian clock. SCF(ORE9) seems to be involved in senescence. SCF(EBF1/EBF2) may regulate ethylene signaling. Plays a role during embryogenesis and early postembryonic development, especially during cell elongation and division. Contributes to the correct chromosome segregation during tetrad formation. This chain is SKP1-like protein 1A, found in Arabidopsis thaliana (Mouse-ear cress).